A 237-amino-acid chain; its full sequence is Phosphoribosylaminoimidazole-succinocarboxamide synthase (237 aa).

This sequence belongs to the SAICAR synthetase family.

It carries out the reaction 5-amino-1-(5-phospho-D-ribosyl)imidazole-4-carboxylate + L-aspartate + ATP = (2S)-2-[5-amino-1-(5-phospho-beta-D-ribosyl)imidazole-4-carboxamido]succinate + ADP + phosphate + 2 H(+). Its pathway is purine metabolism; IMP biosynthesis via de novo pathway; 5-amino-1-(5-phospho-D-ribosyl)imidazole-4-carboxamide from 5-amino-1-(5-phospho-D-ribosyl)imidazole-4-carboxylate: step 1/2. This is Phosphoribosylaminoimidazole-succinocarboxamide synthase from Pectobacterium atrosepticum (strain SCRI 1043 / ATCC BAA-672) (Erwinia carotovora subsp. atroseptica).